We begin with the raw amino-acid sequence, 131 residues long: D-ribose pyranase (131 aa).

Catalysis depends on His-20, which acts as the Proton donor. Residues Asp-28, His-98, and 120–122 (YAN) each bind substrate.

It belongs to the RbsD / FucU family. RbsD subfamily. As to quaternary structure, homodecamer.

Its subcellular location is the cytoplasm. It carries out the reaction beta-D-ribopyranose = beta-D-ribofuranose. Its pathway is carbohydrate metabolism; D-ribose degradation; D-ribose 5-phosphate from beta-D-ribopyranose: step 1/2. Catalyzes the interconversion of beta-pyran and beta-furan forms of D-ribose. This Clostridium botulinum (strain Eklund 17B / Type B) protein is D-ribose pyranase.